Here is a 103-residue protein sequence, read N- to C-terminus: Large ribosomal subunit protein bL21 (103 aa).

It belongs to the bacterial ribosomal protein bL21 family. In terms of assembly, part of the 50S ribosomal subunit. Contacts protein L20.

In terms of biological role, this protein binds to 23S rRNA in the presence of protein L20. In Kineococcus radiotolerans (strain ATCC BAA-149 / DSM 14245 / SRS30216), this protein is Large ribosomal subunit protein bL21.